The sequence spans 76 residues: Spermatid nuclear transition protein 3 (76 aa).

A compositionally biased stretch (polar residues) spans 1–11; the sequence is AKVTEKSWQPQ. 2 disordered regions span residues 1-34 and 56-76; these read AKVT…GKVR and VITT…ETIP. The span at 16-34 shows a compositional bias: basic residues; it reads KRWKKRKTPSQPRSRGKVR.

It localises to the nucleus. The protein localises to the chromosome. Involved in nuclear basic protein transition: histones are replaced by spermatid specific proteins which are themselves replaced by protamines in late spermatids. The chain is Spermatid nuclear transition protein 3 (TNP3) from Sus scrofa (Pig).